Reading from the N-terminus, the 499-residue chain is Probable cytosol aminopeptidase (499 aa).

Residues Lys-267 and Asp-272 each coordinate Mn(2+). The active site involves Lys-279. Residues Asp-290, Asp-349, and Glu-351 each contribute to the Mn(2+) site. Residue Arg-353 is part of the active site.

Belongs to the peptidase M17 family. The cofactor is Mn(2+).

The protein localises to the cytoplasm. It carries out the reaction Release of an N-terminal amino acid, Xaa-|-Yaa-, in which Xaa is preferably Leu, but may be other amino acids including Pro although not Arg or Lys, and Yaa may be Pro. Amino acid amides and methyl esters are also readily hydrolyzed, but rates on arylamides are exceedingly low.. The enzyme catalyses Release of an N-terminal amino acid, preferentially leucine, but not glutamic or aspartic acids.. In terms of biological role, presumably involved in the processing and regular turnover of intracellular proteins. Catalyzes the removal of unsubstituted N-terminal amino acids from various peptides. This chain is Probable cytosol aminopeptidase, found in Buchnera aphidicola subsp. Acyrthosiphon pisum (strain Tuc7).